The following is a 283-amino-acid chain: Protease HtpX (283 aa).

A run of 2 helical transmembrane segments spans residues 4–24 and 33–53; these read ILLFLATNMAVMLVLGIILSV and GGILIMALLFGFAGSLISLFL. Residue H139 participates in Zn(2+) binding. E140 is an active-site residue. Residue H143 coordinates Zn(2+). A run of 2 helical transmembrane segments spans residues 147–167 and 190–210; these read GDMVTMALLQGVLNTFVIFLS and IYFLVSMVLEMLFGVLASIIA. Residue E218 coordinates Zn(2+).

The protein belongs to the peptidase M48B family. Zn(2+) serves as cofactor.

It is found in the cell inner membrane. The sequence is that of Protease HtpX from Haemophilus influenzae (strain PittEE).